The sequence spans 141 residues: Hemoglobin subunit alpha-D (141 aa).

Residues 1 to 141 (MLTEDEKQLI…VSAVLAEKYR (141 aa)) enclose the Globin domain. Heme b is bound by residues His58 and His87.

This sequence belongs to the globin family. In terms of assembly, heterotetramer of two alpha-D chains and two beta chains. In terms of tissue distribution, red blood cells.

Functionally, involved in oxygen transport from the lung to the various peripheral tissues. This Chelonoidis carbonarius (Red-footed tortoise) protein is Hemoglobin subunit alpha-D (HBAD).